The chain runs to 370 residues: tRNA-specific 2-thiouridylase MnmA (370 aa).

Residues 8 to 15 (GMSGGVDS) and Met-34 contribute to the ATP site. The interaction with target base in tRNA stretch occupies residues 104–106 (NPD). The active-site Nucleophile is Cys-109. Cysteines 109 and 202 form a disulfide. Gly-134 contributes to the ATP binding site. The tract at residues 152–154 (KDQ) is interaction with tRNA. The active-site Cysteine persulfide intermediate is Cys-202. Positions 309 to 310 (RY) are interaction with tRNA.

The protein belongs to the MnmA/TRMU family.

Its subcellular location is the cytoplasm. It catalyses the reaction S-sulfanyl-L-cysteinyl-[protein] + uridine(34) in tRNA + AH2 + ATP = 2-thiouridine(34) in tRNA + L-cysteinyl-[protein] + A + AMP + diphosphate + H(+). Its function is as follows. Catalyzes the 2-thiolation of uridine at the wobble position (U34) of tRNA, leading to the formation of s(2)U34. The polypeptide is tRNA-specific 2-thiouridylase MnmA (Metamycoplasma arthritidis (strain 158L3-1) (Mycoplasma arthritidis)).